The following is a 150-amino-acid chain: UPF0756 membrane protein NT05HA_0561 (150 aa).

The next 4 membrane-spanning stretches (helical) occupy residues 1-21 (MSLQ…LGIF), 52-72 (YGLS…LVSG), 81-101 (AFVS…AWLA), and 128-148 (FLGG…VLIG).

The protein belongs to the UPF0756 family.

Its subcellular location is the cell membrane. The chain is UPF0756 membrane protein NT05HA_0561 from Aggregatibacter aphrophilus (strain NJ8700) (Haemophilus aphrophilus).